We begin with the raw amino-acid sequence, 910 residues long: Seizure 6-like protein 2 (910 aa).

Positions 1–27 are cleaved as a signal peptide; sequence MGTPKAQHPPPSQLLLLILLSCAWIEG. Topologically, residues 28–844 are extracellular; the sequence is LPLKEDEMMP…DPSRQLEGGN (817 aa). A disordered region spans residues 70–152; that stretch reads PGSDPDPTLA…PLRPEGGEEE (83 aa). Pro residues predominate over residues 123 to 145; sequence LTPPPGTTAPPPPGPASPVPPLR. Cys-173 and Cys-202 are oxidised to a cystine. Positions 173–286 constitute a CUB 1 domain; that stretch reads CNNNISEGEG…NGFRIHYQAY (114 aa). An N-linked (GlcNAc...) asparagine glycan is attached at Asn-222. The Sushi 1 domain maps to 288-347; the sequence is LSCGFPPRPAHGDVSVTDLHPGGTATFHCDSGYQLQGEETLICLNGTRPAWTGEPPSCTA. Disulfide bonds link Cys-290–Cys-330, Cys-316–Cys-345, Cys-349–Cys-376, Cys-464–Cys-508, Cys-491–Cys-523, Cys-527–Cys-553, Cys-644–Cys-686, Cys-672–Cys-699, Cys-705–Cys-747, Cys-733–Cys-764, Cys-771–Cys-813, and Cys-799–Cys-828. 4 N-linked (GlcNAc...) asparagine glycosylation sites follow: Asn-332, Asn-373, Asn-473, and Asn-517. The region spanning 349–459 is the CUB 2 domain; that stretch reads CGGTIHNATL…LLLSLRFEAF (111 aa). The 64-residue stretch at 462–525 folds into the Sushi 2 domain; it reads DRCFPPFLAH…WNDTEPACKA (64 aa). The CUB 3 domain occupies 527–638; that stretch reads CGGELSEPAG…QGFVLHFKEV (112 aa). Sushi domains are found at residues 642-701, 703-766, and 769-830; these read DTCP…ACQK, MTCA…KCAL, and EPCL…LCKV. Residues 845–865 traverse the membrane as a helical segment; sequence LALAILLPLGLVIVLGIGVYI. Residues 866–910 are Cytoplasmic-facing; the sequence is YYTKLQGKSLFGFSGSHSYSPITVESDFSNPLYEAGDTREYEVSI.

It belongs to the SEZ6 family. Expressed exclusively in the brain, predominantly in the neurons. Wide expression in the gray matter of the brain with high levels in the olfactory bulb, anterior olfactory nuclei, hippocampal formation and cerebellar cortex. Detected diffusely and weakly in the white matter, such as the corpus callosum and cerebellar medulla. In the cerebellar cortex, intensely expressed in Purkinje cells (PC) and granule cells. Detected also in interneurons in the molecular layer. Up-regulated at two weeks after birth.

Its subcellular location is the cell membrane. It localises to the endoplasmic reticulum membrane. In terms of biological role, may contribute to specialized endoplasmic reticulum functions in neurons. This chain is Seizure 6-like protein 2 (Sez6l2), found in Mus musculus (Mouse).